The sequence spans 196 residues: Imidazoleglycerol-phosphate dehydratase (196 aa).

The protein belongs to the imidazoleglycerol-phosphate dehydratase family.

Its subcellular location is the cytoplasm. It carries out the reaction D-erythro-1-(imidazol-4-yl)glycerol 3-phosphate = 3-(imidazol-4-yl)-2-oxopropyl phosphate + H2O. It participates in amino-acid biosynthesis; L-histidine biosynthesis; L-histidine from 5-phospho-alpha-D-ribose 1-diphosphate: step 6/9. This chain is Imidazoleglycerol-phosphate dehydratase, found in Halobacterium salinarum (strain ATCC 700922 / JCM 11081 / NRC-1) (Halobacterium halobium).